The primary structure comprises 644 residues: G-protein coupled receptor-associated protein LMBRD2 (644 aa).

The Extracellular segment spans residues 1-4; sequence MGTV. The chain crosses the membrane as a helical span at residues 5 to 27; the sequence is SLAVQLFIVFLLTSYLLNKYSTI. The Cytoplasmic portion of the chain corresponds to 28–31; it reads RKQN. A helical transmembrane segment spans residues 32–52; it reads PIVTISTFIGWYFSLIIVFVL. The Extracellular segment spans residues 53–102; the sequence is PLDVAITFFHKCENDRQRVLNTTSTPAPIVPECELPGGYVPDDVLFDLWR. N-linked (GlcNAc...) asparagine glycosylation occurs at N73. The helical transmembrane segment at 103-123 threads the bilayer; it reads VVYWSAQILTWLILPLLQSYV. The Cytoplasmic portion of the chain corresponds to 124–145; it reads TAGNFTIFGKIRAAVINNTVYY. The helical transmembrane segment at 146-166 threads the bilayer; the sequence is AIYSLCFLAILIYAMFKGVSI. The Extracellular portion of the chain corresponds to 167–172; it reads NIENLK. Residues 173–193 form a helical membrane-spanning segment; sequence VILVSASNTWGLFLLVVLLGH. The Cytoplasmic segment spans residues 194 to 369; the sequence is GLVELPRSLW…RLQTPFCRVL (176 aa). Residues 216–245 are a coiled coil; that stretch reads YFDIEKLASEKSEAEENVKEIYKKVRVLFN. The chain crosses the membrane as a helical span at residues 370 to 390; the sequence is GVVTVFMTFFVLFSECTFFVV. The Extracellular segment spans residues 391-412; it reads SYTVSPAAFVTEYASNRFHYKY. A helical transmembrane segment spans residues 413 to 433; it reads TQFVAFGIIVYLITCAYFTIF. Over 434–453 the chain is Cytoplasmic; that stretch reads RLQIYKYYHLDPNGHTDENS. A helical membrane pass occupies residues 454-474; that stretch reads ILFSAILLCRLTPPICLNFLG. Residues 475-502 are Extracellular-facing; sequence MIHMDSHVSMAKSFGVETQFTKLMGHLD. Residues 503 to 523 form a helical membrane-spanning segment; sequence VIPILAKGINIYLPICIILLC. Over 524-644 the chain is Cytoplasmic; sequence AIHYYRVGAY…PSSSGFFDDM (121 aa). Over residues 567–576 the composition is skewed to basic and acidic residues; that stretch reads SIKRSNERNQ. The interval 567–644 is disordered; the sequence is SIKRSNERNQ…PSSSGFFDDM (78 aa). The span at 578-594 shows a compositional bias: low complexity; sequence NQSWTNTITSNTSTTSN. A compositionally biased stretch (polar residues) spans 621-644; sequence VSSTTRISLSPTEHPSSSGFFDDM.

Belongs to the LIMR family.

It localises to the cell membrane. In terms of biological role, may associate with G-protein coupled receptors and regulate downstream signaling pathways. This chain is G-protein coupled receptor-associated protein LMBRD2, found in Caenorhabditis briggsae.